The primary structure comprises 163 residues: NADH-quinone oxidoreductase subunit I (163 aa).

2 consecutive 4Fe-4S ferredoxin-type domains span residues 54-84 (LRRY…IESE) and 94-123 (TRYD…ETRI). Residues C64, C67, C70, C74, C103, C106, C109, and C113 each contribute to the [4Fe-4S] cluster site.

The protein belongs to the complex I 23 kDa subunit family. In terms of assembly, NDH-1 is composed of 14 different subunits. Subunits NuoA, H, J, K, L, M, N constitute the membrane sector of the complex. Requires [4Fe-4S] cluster as cofactor.

Its subcellular location is the cell inner membrane. The catalysed reaction is a quinone + NADH + 5 H(+)(in) = a quinol + NAD(+) + 4 H(+)(out). NDH-1 shuttles electrons from NADH, via FMN and iron-sulfur (Fe-S) centers, to quinones in the respiratory chain. The immediate electron acceptor for the enzyme in this species is believed to be ubiquinone. Couples the redox reaction to proton translocation (for every two electrons transferred, four hydrogen ions are translocated across the cytoplasmic membrane), and thus conserves the redox energy in a proton gradient. The protein is NADH-quinone oxidoreductase subunit I of Methylobacillus flagellatus (strain ATCC 51484 / DSM 6875 / VKM B-1610 / KT).